We begin with the raw amino-acid sequence, 175 residues long: Glutamyl-tRNA(Gln) amidotransferase subunit F, mitochondrial (175 aa).

Residues 1–19 (MLKVSARHAPVLRLPRRFY) constitute a mitochondrion transit peptide.

This sequence belongs to the GatF family. Subunit of the heterotrimeric GatFAB amidotransferase (AdT) complex, composed of A, B and F subunits.

Its subcellular location is the mitochondrion inner membrane. The catalysed reaction is L-glutamyl-tRNA(Gln) + L-glutamine + ATP + H2O = L-glutaminyl-tRNA(Gln) + L-glutamate + ADP + phosphate + H(+). Allows the formation of correctly charged Gln-tRNA(Gln) through the transamidation of misacylated Glu-tRNA(Gln) in the mitochondria. The reaction takes place in the presence of glutamine and ATP through an activated gamma-phospho-Glu-tRNA(Gln). Required for proper protein synthesis within the mitochondrion. The protein is Glutamyl-tRNA(Gln) amidotransferase subunit F, mitochondrial of Lachancea thermotolerans (strain ATCC 56472 / CBS 6340 / NRRL Y-8284) (Yeast).